A 429-amino-acid chain; its full sequence is Adenylosuccinate synthetase (429 aa).

Residues 12 to 18 (GDEGKGK) and 40 to 42 (GHT) each bind GTP. Residue aspartate 13 is the Proton acceptor of the active site. Mg(2+)-binding residues include aspartate 13 and glycine 40. IMP contacts are provided by residues 13-16 (DEGK), 38-41 (NAGH), threonine 129, arginine 143, glutamine 224, threonine 239, and arginine 303. Catalysis depends on histidine 41, which acts as the Proton donor. 299-305 (VTTGRAR) is a substrate binding site. GTP is bound by residues arginine 305, 331–333 (KLD), and 413–415 (GVG).

Belongs to the adenylosuccinate synthetase family. In terms of assembly, homodimer. Mg(2+) is required as a cofactor.

The protein localises to the cytoplasm. It catalyses the reaction IMP + L-aspartate + GTP = N(6)-(1,2-dicarboxyethyl)-AMP + GDP + phosphate + 2 H(+). The protein operates within purine metabolism; AMP biosynthesis via de novo pathway; AMP from IMP: step 1/2. In terms of biological role, plays an important role in the de novo pathway of purine nucleotide biosynthesis. Catalyzes the first committed step in the biosynthesis of AMP from IMP. This chain is Adenylosuccinate synthetase, found in Rhodococcus jostii (strain RHA1).